The sequence spans 78 residues: DNA gyrase inhibitor YacG (78 aa).

Positions 7, 10, 26, and 30 each coordinate Zn(2+).

The protein belongs to the DNA gyrase inhibitor YacG family. Interacts with GyrB. Zn(2+) is required as a cofactor.

In terms of biological role, inhibits all the catalytic activities of DNA gyrase by preventing its interaction with DNA. Acts by binding directly to the C-terminal domain of GyrB, which probably disrupts DNA binding by the gyrase. The protein is DNA gyrase inhibitor YacG of Colwellia psychrerythraea (strain 34H / ATCC BAA-681) (Vibrio psychroerythus).